Here is a 337-residue protein sequence, read N- to C-terminus: Nicotinate-nucleotide--dimethylbenzimidazole phosphoribosyltransferase (337 aa).

Glu305 acts as the Proton acceptor in catalysis.

Belongs to the CobT family.

It catalyses the reaction 5,6-dimethylbenzimidazole + nicotinate beta-D-ribonucleotide = alpha-ribazole 5'-phosphate + nicotinate + H(+). Its pathway is nucleoside biosynthesis; alpha-ribazole biosynthesis; alpha-ribazole from 5,6-dimethylbenzimidazole: step 1/2. Functionally, catalyzes the synthesis of alpha-ribazole-5'-phosphate from nicotinate mononucleotide (NAMN) and 5,6-dimethylbenzimidazole (DMB). The sequence is that of Nicotinate-nucleotide--dimethylbenzimidazole phosphoribosyltransferase from Jannaschia sp. (strain CCS1).